A 317-amino-acid polypeptide reads, in one-letter code: Eukaryotic translation initiation factor 2 subunit 2 (317 aa).

The segment at 1–146 (MSATEEENVL…KEKTITTSDG (146 aa)) is disordered. Over residues 79-90 (AIEKLENEGAHD) the composition is skewed to basic and acidic residues. The span at 109–125 (KSSTTTTTSTTTTTTEP) shows a compositional bias: low complexity. The C4-type zinc-finger motif lies at 222 to 246 (HVYNYVFAELGTNGSIDGNQRLVIR).

It belongs to the eIF-2-beta/eIF-5 family. Eukaryotic translation initiation factor 2 eIF2 is a heterotrimeric complex composed of an alpha, a beta and a gamma subunit.

The protein localises to the cytoplasm. The protein resides in the cytosol. In terms of biological role, component of the eIF2 complex that functions in the early steps of protein synthesis by forming a ternary complex with GTP and initiator tRNA. This complex binds to a 40S ribosomal subunit, followed by mRNA binding to form a 43S pre-initiation complex (43S PIC). Junction of the 60S ribosomal subunit to form the 80S initiation complex is preceded by hydrolysis of the GTP bound to eIF2 and release of an eIF2-GDP binary complex. In order for eIF2 to recycle and catalyze another round of initiation, the GDP bound to eIF2 must exchange with GTP by way of a reaction catalyzed by eIF2B. The chain is Eukaryotic translation initiation factor 2 subunit 2 (eif2s2) from Dictyostelium discoideum (Social amoeba).